The chain runs to 62 residues: Large ribosomal subunit protein bL28 (62 aa).

Residues 1 to 26 (MARKCYVTGKSPKSGNNRSHALNKTK) are disordered. Positions 11–20 (SPKSGNNRSH) are enriched in polar residues.

Belongs to the bacterial ribosomal protein bL28 family.

The polypeptide is Large ribosomal subunit protein bL28 (Exiguobacterium sp. (strain ATCC BAA-1283 / AT1b)).